The following is a 225-amino-acid chain: Transcriptional regulatory protein CssR (225 aa).

The region spanning threonine 4–leucine 117 is the Response regulatory domain. Position 52 is a 4-aspartylphosphate (aspartate 52). The ompR/PhoB-type DNA-binding region spans lysine 129–serine 224.

Phosphorylated by CssS.

It is found in the cytoplasm. Its function is as follows. Member of the two-component regulatory system CssS/CssR required to control the cellular response to secretion stress. The polypeptide is Transcriptional regulatory protein CssR (cssR) (Bacillus subtilis (strain 168)).